The following is a 303-amino-acid chain: MINSKLKNRNLNQVNVFNFSELFKLMKPRVMSLVIFTCAVGLLMAPSTVSTKDAMIAILLVSIGAGAAGALNMWYESDLDALMTRTCLRPIPMGKVNKNQALIFGTSLSFFSVIALDYFANTISAVLLLFTILFYVFVYTIWLKRKTPQNIVIGGAAGALPPVIGWTIATNSLSLEPITFFLIIFFWTPSHFWALSLYKSDDYKKAKIPMLPLTNGIESTKINILVYSLLMLPMVILPYAIDFVGLVFLVPALMLTLYYNILCFELYKFKINKFNPKKAKTIFGYSILYLFLIFVIFLIDKIL.

9 helical membrane passes run 30-50 (VMSL…STVS), 54-74 (AMIA…LNMW), 101-121 (ALIF…YFAN), 123-143 (ISAV…TIWL), 150-170 (NIVI…TIAT), 178-198 (ITFF…LSLY), 219-241 (STKI…PYAI), 245-262 (GLVF…YNIL), and 279-299 (AKTI…IFLI).

This sequence belongs to the UbiA prenyltransferase family. Protoheme IX farnesyltransferase subfamily.

The protein resides in the cell inner membrane. The enzyme catalyses heme b + (2E,6E)-farnesyl diphosphate + H2O = Fe(II)-heme o + diphosphate. It functions in the pathway porphyrin-containing compound metabolism; heme O biosynthesis; heme O from protoheme: step 1/1. Converts heme B (protoheme IX) to heme O by substitution of the vinyl group on carbon 2 of heme B porphyrin ring with a hydroxyethyl farnesyl side group. The polypeptide is Protoheme IX farnesyltransferase (Pelagibacter ubique (strain HTCC1062)).